We begin with the raw amino-acid sequence, 1337 residues long: MATPRAPRWPPPSLLLLLLLPLLLLPPAAPGARGSLPSPAHRTLLPVAGPLSPPGAGHTAPGPGVATRRGRSGRVPRGVSAAAARNRWLESNNPEPHIGCSPSYQSQEDHSGSRKGVTAQNARMSHSSSEGPENPPLLPETSAEWSNMASSHRADIAGLRRGPSPEITTAPTAHSSLLSLESLPESPSSSRSQRRITPSQTESGTSLGFLERTRELPEEGTVHTQVAGTWVSRQASHPALEPGEPTVLSQKRNSSGQEHSGPPFSWSQSHPPPSDHPSSSGSIKNGNNFTALQNPSVTQTKSMLITDTYTNGVPRTLRSLPVGVDPADETEGFPEHSRLGITSMSVRSSPSVKDSRTNSGLTEHLGDGEGTELSTENGYGLPSIHWQSDAPSFGGRQLASSSEAGDGRAMPLTEAVFRSDPSIGGGESTGRWILTKKKTSTDAAESSALHPEAGGAGGLTQSSHAAQQPRGGGEDSGMGGRSYAESSSSSSSTSSSESLDSSAPLREHSLTGLSYTREHGSDAGQRTSSDHTDHGYVPSTFTKGERTLLSITDNTSYSEASESSTSSVKISDSPSQAQPKQSSMSSDDDEPAQSSTESPVLHTSNLPTYTSTVNMPNTLVLDTGTKPVEDPSDSRVPSTQPSPSQPQPFSSALPSTRSPGSTSETTTSSPSPSPISLLVSTLAPYSVSQTTFPHPSSTLVPHRPREPRVTSVQMSTAISAIALIPSNQTANPKNQSTPQQEKPITEAKSPSLVSPPTDSTKAVTVSLPPGAPWSPALTGFSTGPALPATSTSLAQMSPALTSAMPQTTHSPVTSPSTLSHVEALTSGAVVVHTTPKKPHLPTNPEILVPHISTEGAITTEGNREHTDPTTQPIPLTTSTTSAGERTTELGRAEESSPSHFLTPSSPQTTDVSTAEMLTSRYITFAAQSTSQSPTALPPLTPVNSCTVNPCLHDGKCIVDLTGRGYRCVCPPAWQGENCSVDVNECLSSPCPPLATCNNTQGSFTCRCPVGYQLEKGICNLVRTFVTEFKLKKTFLNTTAENHSNTQELENEIAQTLNVCFSTLPGYIRTTAHVSREPSTVFISLKTTFALASNVTLFDLADRIQKYVNSCRSSAEVCQLLGSQRRVFRAGSLCKRKSPECDKETSICTDLDGVALCQCKSGYFQFNKMDHSCRACEDGYRLENETCMSCPFGLGGLNCGNPYQLITVVIAAAGGGLLLILGVALIVTCCRKSKNDISKLIFKSGDFQMSPYTDVPKNPRSQEWGREAIEMHENGSTKNLLQMTDVYYSPTNVRNPELERNGLYPAYTGLPGSRHSCIFPGQYNPSFISDESRRRDYF.

Residues 1-31 (MATPRAPRWPPPSLLLLLLLPLLLLPPAAPG) form the signal peptide. 2 stretches are compositionally biased toward low complexity: residues 28–40 (AAPG…PSPA) and 54–66 (PGAG…PGVA). Disordered stretches follow at residues 28 to 149 (AAPG…SNMA), 175 to 211 (SSLL…GFLE), 235 to 296 (ASHP…QNPS), 313 to 675 (VPRT…PSPI), 723 to 767 (LIPS…TVSL), and 860 to 909 (EGNR…PQTT). The Extracellular portion of the chain corresponds to 32–1204 (ARGSLPSPAH…GLNCGNPYQL (1173 aa)). Positions 118-131 (TAQNARMSHSSSEG) are enriched in polar residues. Residues 175–190 (SSLLSLESLPESPSSS) show a composition bias toward low complexity. Composition is skewed to polar residues over residues 195–206 (RITPSQTESGTS), 247–258 (VLSQKRNSSGQE), 283–296 (IKNG…QNPS), and 340–361 (GITS…NSGL). Residues 470–480 (RGGGEDSGMGG) show a composition bias toward gly residues. Composition is skewed to low complexity over residues 486 to 502 (SSSS…LDSS) and 556 to 575 (SYSE…DSPS). Composition is skewed to polar residues over residues 576-585 (QAQPKQSSMS) and 592-617 (AQSS…NMPN). The span at 637 to 675 (PSTQPSPSQPQPFSSALPSTRSPGSTSETTTSSPSPSPI) shows a compositional bias: low complexity. 2 stretches are compositionally biased toward polar residues: residues 725-742 (PSNQ…QQEK) and 751-763 (SLVS…TKAV). Over residues 868 to 884 (PTTQPIPLTTSTTSAGE) the composition is skewed to low complexity. The segment covering 885–896 (RTTELGRAEESS) has biased composition (basic and acidic residues). Residues 897–909 (PSHFLTPSSPQTT) show a composition bias toward polar residues. The EGF-like 1 domain maps to 941–979 (PVNSCTVNPCLHDGKCIVDLTGRGYRCVCPPAWQGENCS). Intrachain disulfides connect C945/C956, C950/C967, C969/C978, C985/C996, C990/C1005, and C1007/C1018. In terms of domain architecture, EGF-like 2; calcium-binding spans 981-1019 (DVNECLSSPCPPLATCNNTQGSFTCRCPVGYQLEKGICN). Residue N1093 is glycosylated (N-linked (GlcNAc...) asparagine). A helical transmembrane segment spans residues 1205–1225 (ITVVIAAAGGGLLLILGVALI). Topologically, residues 1226-1337 (VTCCRKSKND…SDESRRRDYF (112 aa)) are cytoplasmic. Position 1315 is a phosphoserine (S1315).

Interacts with CCM2 and KRIT1; KRIT1 markedly facilitates interaction with CCM2.

It is found in the cell membrane. The protein localises to the cell junction. Functionally, receptor component of the CCM signaling pathway which is a crucial regulator of heart and vessel formation and integrity. May be acting by stabilizing endothelial cell junctions. This chain is Protein HEG homolog 1 (Heg1), found in Mus musculus (Mouse).